The following is a 363-amino-acid chain: 3-isopropylmalate dehydrogenase (363 aa).

78-91 lines the NAD(+) pocket; the sequence is GPKWEHLPPAEQPE. Arginine 99, arginine 109, arginine 138, and aspartate 227 together coordinate substrate. Residues aspartate 227, aspartate 251, and aspartate 255 each coordinate Mg(2+). Residue 285–297 coordinates NAD(+); the sequence is GSAPDIAGKGIAN.

It belongs to the isocitrate and isopropylmalate dehydrogenases family. LeuB type 1 subfamily. In terms of assembly, homodimer. Requires Mg(2+) as cofactor. Mn(2+) serves as cofactor.

The protein localises to the cytoplasm. The enzyme catalyses (2R,3S)-3-isopropylmalate + NAD(+) = 4-methyl-2-oxopentanoate + CO2 + NADH. It participates in amino-acid biosynthesis; L-leucine biosynthesis; L-leucine from 3-methyl-2-oxobutanoate: step 3/4. Catalyzes the oxidation of 3-carboxy-2-hydroxy-4-methylpentanoate (3-isopropylmalate) to 3-carboxy-4-methyl-2-oxopentanoate. The product decarboxylates to 4-methyl-2 oxopentanoate. This chain is 3-isopropylmalate dehydrogenase, found in Photorhabdus laumondii subsp. laumondii (strain DSM 15139 / CIP 105565 / TT01) (Photorhabdus luminescens subsp. laumondii).